The chain runs to 400 residues: Elongation factor Tu (400 aa).

The tr-type G domain occupies 10-209 (KPHVNIGTIG…AVDKYIPTPQ (200 aa)). The tract at residues 19–26 (GHVDHGKT) is G1. 19-26 (GHVDHGKT) is a GTP binding site. Mg(2+) is bound at residue T26. The tract at residues 60 to 64 (GITIN) is G2. Residues 81-84 (DCPG) are G3. GTP-binding positions include 81–85 (DCPGH) and 136–139 (NKVD). Positions 136–139 (NKVD) are G4. A G5 region spans residues 174-176 (SAL).

Belongs to the TRAFAC class translation factor GTPase superfamily. Classic translation factor GTPase family. EF-Tu/EF-1A subfamily. In terms of assembly, monomer.

The protein resides in the cytoplasm. The catalysed reaction is GTP + H2O = GDP + phosphate + H(+). Functionally, GTP hydrolase that promotes the GTP-dependent binding of aminoacyl-tRNA to the A-site of ribosomes during protein biosynthesis. The sequence is that of Elongation factor Tu from Caldicellulosiruptor bescii (strain ATCC BAA-1888 / DSM 6725 / KCTC 15123 / Z-1320) (Anaerocellum thermophilum).